Reading from the N-terminus, the 220-residue chain is Ribosomal RNA large subunit methyltransferase E (220 aa).

Positions 60, 62, 92, 108, and 133 each coordinate S-adenosyl-L-methionine. Lysine 173 serves as the catalytic Proton acceptor. A disordered region spans residues 198–220; sequence KPKASRDKSSETFILGRQLKHPR.

It belongs to the class I-like SAM-binding methyltransferase superfamily. RNA methyltransferase RlmE family.

It is found in the cytoplasm. It carries out the reaction uridine(2552) in 23S rRNA + S-adenosyl-L-methionine = 2'-O-methyluridine(2552) in 23S rRNA + S-adenosyl-L-homocysteine + H(+). In terms of biological role, specifically methylates the uridine in position 2552 of 23S rRNA at the 2'-O position of the ribose in the fully assembled 50S ribosomal subunit. This Burkholderia cenocepacia (strain HI2424) protein is Ribosomal RNA large subunit methyltransferase E.